Reading from the N-terminus, the 225-residue chain is Cytidylate kinase (225 aa).

12–20 contacts ATP; that stretch reads GPSGAGKGT.

Belongs to the cytidylate kinase family. Type 1 subfamily.

The protein resides in the cytoplasm. It catalyses the reaction CMP + ATP = CDP + ADP. The catalysed reaction is dCMP + ATP = dCDP + ADP. The protein is Cytidylate kinase of Vibrio cholerae serotype O1 (strain ATCC 39315 / El Tor Inaba N16961).